A 262-amino-acid polypeptide reads, in one-letter code: Octanoyltransferase (262 aa).

The 192-residue stretch at 41-232 (PQLPDGLLLL…SFCQVFGLQA (192 aa)) folds into the BPL/LPL catalytic domain. Substrate contacts are provided by residues 96–103 (RGGEVTYH), 163–165 (AIG), and 176–178 (GFA). The active-site Acyl-thioester intermediate is cysteine 194.

The protein belongs to the LipB family.

It localises to the cytoplasm. It catalyses the reaction octanoyl-[ACP] + L-lysyl-[protein] = N(6)-octanoyl-L-lysyl-[protein] + holo-[ACP] + H(+). It functions in the pathway protein modification; protein lipoylation via endogenous pathway; protein N(6)-(lipoyl)lysine from octanoyl-[acyl-carrier-protein]: step 1/2. Catalyzes the transfer of endogenously produced octanoic acid from octanoyl-acyl-carrier-protein onto the lipoyl domains of lipoate-dependent enzymes. Lipoyl-ACP can also act as a substrate although octanoyl-ACP is likely to be the physiological substrate. This is Octanoyltransferase from Synechococcus sp. (strain JA-2-3B'a(2-13)) (Cyanobacteria bacterium Yellowstone B-Prime).